The chain runs to 462 residues: Trigger factor (462 aa).

A PPIase FKBP-type domain is found at glycine 172–threonine 257. A disordered region spans residues leucine 443–valine 462. Residues leucine 444 to alanine 455 are compositionally biased toward acidic residues.

Belongs to the FKBP-type PPIase family. Tig subfamily.

It is found in the cytoplasm. The catalysed reaction is [protein]-peptidylproline (omega=180) = [protein]-peptidylproline (omega=0). Its function is as follows. Involved in protein export. Acts as a chaperone by maintaining the newly synthesized protein in an open conformation. Functions as a peptidyl-prolyl cis-trans isomerase. The polypeptide is Trigger factor (Methylocella silvestris (strain DSM 15510 / CIP 108128 / LMG 27833 / NCIMB 13906 / BL2)).